The chain runs to 418 residues: Magnesium-chelatase subunit ChlI-2, chloroplastic (418 aa).

The N-terminal 55 residues, 1–55, are a transit peptide targeting the chloroplast; sequence MASLLGRSPSSILTCPRISSPSSTSSMSHLCFGPEKLSGRIQFNPKKNRSRYHVS. Position 56 is an N-acetylvaline (V56). Cystine bridges form between C96/C187 and C348/C390. Residue 113–120 coordinates ATP; it reads GDRGTGKS.

The protein belongs to the Mg-chelatase subunits D/I family. The magnesium chelatase complex is a heterotrimer consisting of subunits CHLI, CHLD and CHLH. Expressed in leaves.

The protein localises to the plastid. Its subcellular location is the chloroplast. The catalysed reaction is protoporphyrin IX + Mg(2+) + ATP + H2O = Mg-protoporphyrin IX + ADP + phosphate + 3 H(+). It functions in the pathway porphyrin-containing compound metabolism; chlorophyll biosynthesis. Its activity is regulated as follows. Redox regulation; active in reducing conditions, inactive in oxidizing conditions. Thioredoxins f and m mediate the reversible reductive activation of oxidized CHLI2. Involved in chlorophyll biosynthesis. Catalyzes the insertion of magnesium ion into protoporphyrin IX to yield Mg-protoporphyrin IX. The reaction takes place in two steps, with an ATP-dependent activation followed by an ATP-dependent chelation step. Possesses low affinity for ATP and may play a limited role in chlorophyll biosynthesis, and contributes to the assembly of the Mg-chelatase complex. This Arabidopsis thaliana (Mouse-ear cress) protein is Magnesium-chelatase subunit ChlI-2, chloroplastic (CHLI2).